The chain runs to 3431 residues: KICSTOR complex protein SZT2 (3431 aa).

3 disordered regions span residues 699–731 (SKEP…PQQA), 1067–1101 (LRDP…TLPS), and 1162–1231 (KPKL…GADG). Positions 1082–1188 (VAKDRAGNST…ATGTKATESQ (107 aa)) are mediates interaction with the GATOR1 complex. Composition is skewed to polar residues over residues 1088-1101 (GNST…TLPS) and 1182-1212 (TKAT…TPSC). The residue at position 1275 (S1275) is a Phosphoserine. The tract at residues 1356 to 1378 (PPSPGPLSPGPFSSSIEEGPEPR) is disordered. S1415 is modified (phosphoserine). 7 disordered regions span residues 1512-1534 (YRES…SDAD), 1629-1678 (PPAS…HPGL), 1806-1883 (RAED…PGET), 2113-2148 (PPSL…SDAV), 2450-2512 (TEAG…LEEG), 2735-2756 (ASPP…GGPL), and 2866-2899 (ETCA…DVPP). Phosphothreonine is present on T1640. Residues 1641-1657 (SESSASFPRSPGQPSSL) are compositionally biased toward polar residues. Residue S1650 is modified to Phosphoserine. Residues 1832-1854 (PLISLPSLSQGGSQPGPSRGLSL) are compositionally biased toward low complexity. The span at 2118–2129 (LSRSQEPISSED) shows a compositional bias: polar residues. The span at 2460-2473 (TTDDIVLDRPEDTR) shows a compositional bias: basic and acidic residues. Over residues 2739–2749 (LSREQGRLSGS) the composition is skewed to low complexity.

In terms of assembly, part of the KICSTOR complex composed of KPTN, ITFG2, KICS2 and SZT2. SZT2 probably serves as a link between the other three proteins in the KICSTOR complex and may mediate the direct interaction with the GATOR complex via GATOR1. The KICSTOR complex interacts directly with the GATOR1 complex and most probably indirectly with the GATOR2 complex in an amino acid-independent manner. In terms of tissue distribution, mostly expressed in brain, spinal cord and lung.

The protein localises to the lysosome membrane. Its subcellular location is the peroxisome. In terms of biological role, as part of the KICSTOR complex functions in the amino acid-sensing branch of the TORC1 signaling pathway. Recruits, in an amino acid-independent manner, the GATOR1 complex to the lysosomal membranes and allows its interaction with GATOR2 and the RAG GTPases. Functions upstream of the RAG GTPases and is required to negatively regulate mTORC1 signaling in absence of amino acids. In absence of the KICSTOR complex mTORC1 is constitutively localized to the lysosome and activated. The KICSTOR complex is also probably involved in the regulation of mTORC1 by glucose. May play a role in the cellular response to oxidative stress. The chain is KICSTOR complex protein SZT2 from Mus musculus (Mouse).